Here is a 341-residue protein sequence, read N- to C-terminus: L-threonine 3-dehydrogenase (341 aa).

Cys-38 contributes to the Zn(2+) binding site. Catalysis depends on charge relay system residues Thr-40 and His-43. Residues His-63, Glu-64, Cys-93, Cys-96, Cys-99, and Cys-107 each contribute to the Zn(2+) site. NAD(+) is bound by residues Ile-175, Asp-195, Arg-200, 262-264, and 286-287; these read LGI and IY.

Belongs to the zinc-containing alcohol dehydrogenase family. As to quaternary structure, homotetramer. Zn(2+) is required as a cofactor.

It is found in the cytoplasm. It carries out the reaction L-threonine + NAD(+) = (2S)-2-amino-3-oxobutanoate + NADH + H(+). It functions in the pathway amino-acid degradation; L-threonine degradation via oxydo-reductase pathway; glycine from L-threonine: step 1/2. Catalyzes the NAD(+)-dependent oxidation of L-threonine to 2-amino-3-ketobutyrate. This Yersinia pseudotuberculosis serotype O:1b (strain IP 31758) protein is L-threonine 3-dehydrogenase.